The primary structure comprises 1679 residues: Probable myosin heavy chain ECU04_1000 (1679 aa).

Positions Met-1–Ser-14 are enriched in polar residues. Residues Met-1–Val-22 are disordered. The Myosin N-terminal SH3-like domain occupies Met-31–Pro-79. In terms of domain architecture, Myosin motor spans Asp-83–Asp-754. Gly-176–Thr-183 provides a ligand contact to ATP. Residues Leu-624–Leu-646 are actin-binding. Residues Gly-823 to Leu-1644 adopt a coiled-coil conformation.

This sequence belongs to the TRAFAC class myosin-kinesin ATPase superfamily. Myosin family.

Functionally, cellular myosin that appears to play a role in cytokinesis, cell shape, and specialized functions such as secretion and capping. This chain is Probable myosin heavy chain ECU04_1000, found in Encephalitozoon cuniculi (strain GB-M1) (Microsporidian parasite).